A 237-amino-acid polypeptide reads, in one-letter code: Ribonuclease PH (237 aa).

Phosphate is bound by residues Arg-86 and 124 to 126; that span reads GTR.

It belongs to the RNase PH family. In terms of assembly, homohexameric ring arranged as a trimer of dimers.

It carries out the reaction tRNA(n+1) + phosphate = tRNA(n) + a ribonucleoside 5'-diphosphate. Functionally, phosphorolytic 3'-5' exoribonuclease that plays an important role in tRNA 3'-end maturation. Removes nucleotide residues following the 3'-CCA terminus of tRNAs; can also add nucleotides to the ends of RNA molecules by using nucleoside diphosphates as substrates, but this may not be physiologically important. Probably plays a role in initiation of 16S rRNA degradation (leading to ribosome degradation) during starvation. The protein is Ribonuclease PH of Nitrobacter winogradskyi (strain ATCC 25391 / DSM 10237 / CIP 104748 / NCIMB 11846 / Nb-255).